Consider the following 140-residue polypeptide: MAIERTFSMIKPDATKRNLTGAITKMLEDAGLRVVASKRVWMSRREAEGFYAVHKDRPFFGELVEGMTSGPTIVQVLEGEGAILKNREIMGATNPANADEGTIRKVHALSIGENSVHGSDAPETAAQEIKYWFSDTEIVG.

Residues Lys-11, Phe-59, Arg-87, Thr-93, Arg-104, and Asn-114 each contribute to the ATP site. His-117 acts as the Pros-phosphohistidine intermediate in catalysis.

Belongs to the NDK family. As to quaternary structure, homotetramer. The cofactor is Mg(2+).

Its subcellular location is the cytoplasm. The enzyme catalyses a 2'-deoxyribonucleoside 5'-diphosphate + ATP = a 2'-deoxyribonucleoside 5'-triphosphate + ADP. It catalyses the reaction a ribonucleoside 5'-diphosphate + ATP = a ribonucleoside 5'-triphosphate + ADP. Its function is as follows. Major role in the synthesis of nucleoside triphosphates other than ATP. The ATP gamma phosphate is transferred to the NDP beta phosphate via a ping-pong mechanism, using a phosphorylated active-site intermediate. This Rhizobium johnstonii (strain DSM 114642 / LMG 32736 / 3841) (Rhizobium leguminosarum bv. viciae) protein is Nucleoside diphosphate kinase.